Reading from the N-terminus, the 137-residue chain is Hydrogenase-4 component J (137 aa).

This sequence to E.coli HycH.

Its function is as follows. Possible component of hydrogenase 4. In Escherichia coli (strain K12), this protein is Hydrogenase-4 component J.